The sequence spans 513 residues: OBERON-like protein (513 aa).

The PHD-type zinc-finger motif lies at 166-235 (NGFCNLCMCV…VFRCQACSXT (70 aa)). Residues 372 to 469 (RELADKAREA…LYEKIKLQES (98 aa)) adopt a coiled-coil conformation. The segment at 493 to 513 (YNGPPKADSQSNDCHPFRTNP) is disordered. Over residues 500–513 (DSQSNDCHPFRTNP) the composition is skewed to polar residues.

As to quaternary structure, self-interacts and probably forms heteromers. Binds to VPg of pea seed borne mosaic virus (PSbMV), turnip mosaic virus (TuMV) and lettuce mosaic virus (LMV), but not with VPg of tobacco etch virus (TEV), cowpea mosaic virus (CPMV), tomato black ring virus (TBRV) and grapevine fan leaf virus (GFLV).

The protein resides in the nucleus. Its function is as follows. Required for the maintenance and/or establishment of both the shoot and root meristems, probably by controlling the expression of the meristem genes and of genes required for auxin responses. Involved in the development of the basal pole and in auxin-mediated root and vascular development in the embryo. Confers sensitivity to turnip mosaic virus (TuMV) probably by promoting viral movement and multiplication via interaction with TuMV VPg. The sequence is that of OBERON-like protein (PVIP) from Pisum sativum (Garden pea).